The sequence spans 367 residues: Glycolate oxidase 1 (367 aa).

An N-acetylmethionine modification is found at M1. Residue Y24 coordinates glyoxylate. Residues 77–79 (PTA), S106, 127–129 (QLY), and T155 each bind FMN. Y129 provides a ligand contact to glyoxylate. R164 lines the glyoxylate pocket. FMN is bound by residues K230 and S252. Glyoxylate-binding residues include H254 and R257. The active-site Proton acceptor is H254. FMN is bound by residues 285 to 289 (DGGVR) and 308 to 309 (GR).

This sequence belongs to the FMN-dependent alpha-hydroxy acid dehydrogenase family. As to quaternary structure, homotetramer. Requires FMN as cofactor.

Its subcellular location is the peroxisome. It carries out the reaction glycolate + O2 = glyoxylate + H2O2. Its pathway is photosynthesis; photorespiration; glycine from 2-phosphoglycolate: step 2/3. Functionally, catalyzes the oxidation of glycolate to glyoxylate, with a reduction of O2 to H2O2. Is a key enzyme in photorespiration in green plants. The polypeptide is Glycolate oxidase 1 (GLO1) (Arabidopsis thaliana (Mouse-ear cress)).